The primary structure comprises 610 residues: UvrABC system protein C (610 aa).

The 79-residue stretch at 16-94 folds into the GIY-YIG domain; it reads SQPGVYRMYD…IKLYQPRYNV (79 aa). The UVR domain occupies 204–239; the sequence is QQVLTQLISRMEEASRLLHFEDAARIRDQIQAVRRV.

The protein belongs to the UvrC family. As to quaternary structure, interacts with UvrB in an incision complex.

It is found in the cytoplasm. The UvrABC repair system catalyzes the recognition and processing of DNA lesions. UvrC both incises the 5' and 3' sides of the lesion. The N-terminal half is responsible for the 3' incision and the C-terminal half is responsible for the 5' incision. The protein is UvrABC system protein C of Yersinia enterocolitica serotype O:8 / biotype 1B (strain NCTC 13174 / 8081).